Here is a 680-residue protein sequence, read N- to C-terminus: Dihydroxyacetone phosphate acyltransferase (680 aa).

Ser12 and Ser17 each carry phosphoserine. Residues 162–167 (HRSYID) carry the HXXXXD motif motif. The residue at position 643 (Lys643) is an N6-acetyllysine. The Microbody targeting signal motif lies at 678-680 (AKL).

This sequence belongs to the GPAT/DAPAT family. In terms of assembly, part of a heterotrimeric complex composed of GNPAT, AGPS and a modified form of GNPAT.

The protein resides in the peroxisome membrane. The enzyme catalyses dihydroxyacetone phosphate + an acyl-CoA = a 1-acylglycerone 3-phosphate + CoA. The catalysed reaction is dihydroxyacetone phosphate + hexadecanoyl-CoA = 1-hexadecanoylglycerone 3-phosphate + CoA. Its pathway is membrane lipid metabolism; glycerophospholipid metabolism. Its function is as follows. Dihydroxyacetonephosphate acyltransferase catalyzing the first step in the biosynthesis of plasmalogens, a subset of phospholipids that differ from other glycerolipids by having an alkyl chain attached through a vinyl ether linkage at the sn-1 position of the glycerol backbone, and which unique physical properties have an impact on various aspects of cell signaling and membrane biology. This is Dihydroxyacetone phosphate acyltransferase from Homo sapiens (Human).